We begin with the raw amino-acid sequence, 647 residues long: 1-phosphatidylinositol 4,5-bisphosphate phosphodiesterase zeta-1 (647 aa).

The region spanning C43 to R78 is the EF-hand domain. Positions Q163–R307 constitute a PI-PLC X-box domain. Active-site residues include H178 and H223. In terms of domain architecture, PI-PLC Y-box spans L386–R502. In terms of domain architecture, C2 spans R502 to S627.

Interacts via its C2 domain with PtdIns(3)P and, to a lesser extent, PtdIns(5)P in vitro. Ca(2+) serves as cofactor. Highly expressed in postpuberal testis, where expression is sperm cell-specific. Also expressed in brain of both sexes.

It is found in the nucleus. It localises to the cytoplasm. The protein resides in the perinuclear region. It carries out the reaction a 1,2-diacyl-sn-glycero-3-phospho-(1D-myo-inositol-4,5-bisphosphate) + H2O = 1D-myo-inositol 1,4,5-trisphosphate + a 1,2-diacyl-sn-glycerol + H(+). The production of the second messenger molecules diacylglycerol (DAG) and inositol 1,4,5-trisphosphate (IP3) is mediated by activated phosphatidylinositol-specific phospholipase C enzymes. In vitro, hydrolyzes PtdIns(4,5)P2 in a Ca(2+)-dependent manner. Triggers intracellular Ca(2+) oscillations in oocytes solely during M phase and is involved in inducing oocyte activation and initiating embryonic development up to the blastocyst stage. Is therefore a strong candidate for the egg-activating soluble sperm factor that is transferred from the sperm into the egg cytoplasm following gamete membrane fusion. May exert an inhibitory effect on phospholipase-C-coupled processes that depend on calcium ions and protein kinase C, including CFTR trafficking and function. This Mus musculus (Mouse) protein is 1-phosphatidylinositol 4,5-bisphosphate phosphodiesterase zeta-1.